Here is a 374-residue protein sequence, read N- to C-terminus: Probable neutral protease 2 homolog ARB_00849 (374 aa).

The signal sequence occupies residues 1-19 (MKFLTALSAIGALVATATA). Residues 20 to 189 (AAVPNTPAKQ…KKSRGTIDKR (170 aa)) constitute a propeptide that is removed on maturation. Disulfide bonds link Cys197/Cys268 and Cys275/Cys293. His318 lines the Zn(2+) pocket. Glu319 is a catalytic residue. Residues His322 and Asp333 each coordinate Zn(2+).

It belongs to the peptidase M35 family. The cofactor is Zn(2+).

Its subcellular location is the secreted. The enzyme catalyses Preferential cleavage of bonds with hydrophobic residues in P1'. Also 3-Asn-|-Gln-4 and 8-Gly-|-Ser-9 bonds in insulin B chain.. Its function is as follows. Probable secreted metalloprotease that shows high activities on basic nuclear substrates such as histone and protamine. May be involved in virulence. This chain is Probable neutral protease 2 homolog ARB_00849, found in Arthroderma benhamiae (strain ATCC MYA-4681 / CBS 112371) (Trichophyton mentagrophytes).